A 340-amino-acid polypeptide reads, in one-letter code: ATP-dependent 6-phosphofructokinase (340 aa).

Residue Gly-11 participates in ATP binding. Position 21 to 25 (21 to 25) interacts with ADP; the sequence is RAVVR. ATP contacts are provided by residues 72-73 and 102-105; these read RY and GDGS. Position 103 (Asp-103) interacts with Mg(2+). 125-127 is a substrate binding site; it reads TID. Residue Asp-127 is the Proton acceptor of the active site. Arg-154 is an ADP binding site. Substrate contacts are provided by residues Arg-162 and 169-171; that span reads MGR. Residues 185–187 and 213–215 each bind ADP; these read GAD and KHH. Residues Glu-222, Arg-244, and 250–253 contribute to the substrate site; that span reads HLLR.

This sequence belongs to the phosphofructokinase type A (PFKA) family. ATP-dependent PFK group I subfamily. Prokaryotic clade 'B1' sub-subfamily. As to quaternary structure, homotetramer. Mg(2+) serves as cofactor.

It is found in the cytoplasm. The catalysed reaction is beta-D-fructose 6-phosphate + ATP = beta-D-fructose 1,6-bisphosphate + ADP + H(+). It functions in the pathway carbohydrate degradation; glycolysis; D-glyceraldehyde 3-phosphate and glycerone phosphate from D-glucose: step 3/4. Its activity is regulated as follows. Allosterically activated by ADP and other diphosphonucleosides, and allosterically inhibited by phosphoenolpyruvate. Functionally, catalyzes the phosphorylation of D-fructose 6-phosphate to fructose 1,6-bisphosphate by ATP, the first committing step of glycolysis. This chain is ATP-dependent 6-phosphofructokinase, found in Streptococcus agalactiae serotype Ia (strain ATCC 27591 / A909 / CDC SS700).